The primary structure comprises 305 residues: UDP-N-acetylenolpyruvoylglucosamine reductase (305 aa).

One can recognise an FAD-binding PCMH-type domain in the interval 22 to 190 (KVGGAADFFA…LSARFRLQAG (169 aa)). Arg169 is an active-site residue. Ser220 acts as the Proton donor in catalysis. Glu290 is an active-site residue.

It belongs to the MurB family. FAD serves as cofactor.

It localises to the cytoplasm. The enzyme catalyses UDP-N-acetyl-alpha-D-muramate + NADP(+) = UDP-N-acetyl-3-O-(1-carboxyvinyl)-alpha-D-glucosamine + NADPH + H(+). It participates in cell wall biogenesis; peptidoglycan biosynthesis. Functionally, cell wall formation. The sequence is that of UDP-N-acetylenolpyruvoylglucosamine reductase from Synechococcus sp. (strain RCC307).